Consider the following 690-residue polypeptide: Protein-glutamine gamma-glutamyltransferase 2 (690 aa).

Residue A2 is modified to N-acetylalanine. 2 disulfides stabilise this stretch: C230-C370 and C370-C371. Catalysis depends on residues C277, H335, and D358. Positions 398, 400, 436, 446, and 451 each coordinate Ca(2+). K467 is subject to N6-acetyllysine. 479–486 contacts GTP; it reads RIRVGQNM. E542 serves as a coordination point for Ca(2+). 583–586 contributes to the GTP binding site; it reads RDIY. An Isoglutamyl lysine isopeptide (Gln-Lys) (interchain with K-?) cross-link involves residue Q636.

This sequence belongs to the transglutaminase superfamily. Transglutaminase family. Monomer. Interacts with phospholipase C; promoting alpha-1 adrenergic receptor signaling. Interacts with PLCD1. Ca(2+) serves as cofactor. Disulfide bond formation inactivates the calcium-dependent acyltransferase activity. Cys-370 can form disulfide bonds with both Cys-230 and Cys-371: formation of a disulfide bond between Cys-230 and Cys-370 facilitates formation of the disulfide between Cys-370 and Cys-371, which promotes inactivation of the acyltransferase activity. May also form interchain disulfids between Cys-230 and Cys-370. Ca(2+) protects against disulfide bond formation and inactivation. In terms of processing, auto-transglutaminated: Forms covalent cross-links mediated by transglutaminase between Gln-636 and the epsilon-amino group of a lysine residue of itself or HMGB1, forming homopolymers and heteropolymers, respectively. Post-translationally, S-nitrosylated, leading to inactivation of the acyltransferase activity.

The protein resides in the cytoplasm. It localises to the cytosol. It is found in the nucleus. Its subcellular location is the chromosome. The protein localises to the secreted. The protein resides in the extracellular space. It localises to the extracellular matrix. It is found in the cell membrane. Its subcellular location is the mitochondrion. The catalysed reaction is L-glutaminyl-[protein] + L-lysyl-[protein] = [protein]-L-lysyl-N(6)-5-L-glutamyl-[protein] + NH4(+). The enzyme catalyses L-glutaminyl-[protein] + serotonin = 5-serotonyl-L-glutamyl-[protein] + NH4(+). It catalyses the reaction L-glutaminyl-[protein] + dopamine = 5-dopaminyl-L-glutamyl-[protein] + NH4(+). It carries out the reaction L-glutaminyl-[protein] + histamine = 5-histaminyl-L-glutamyl-[protein] + NH4(+). The catalysed reaction is L-glutaminyl-[protein] + (R)-noradrenaline = 5-(R)-noradrenalinyl-L-glutamyl-[protein] + NH4(+). The enzyme catalyses L-glutaminyl-[protein] + H2O = L-glutamyl-[protein] + NH4(+). Acyltransferase activity is regulated by the binding of GTP and Ca(2+): inactivated by GTP, which stabilizes its closed structure, thereby obstructing the accessibility of substrates to the active sites. In contrast, Ca(2+) acts as a cofactor by inducing conformational change to the active open form. In absence of Ca(2+), Mg(2+) may bind Ca(2+)-binding sites, promoting GTP-binding and subsequent inhibition of the acyltransferase activity. Extracellularly reduced and activated by CLIC3. Functionally, calcium-dependent acyltransferase that catalyzes the formation of covalent bonds between peptide-bound glutamine and various primary amines, such as gamma-amino group of peptide-bound lysine, or mono- and polyamines, thereby producing cross-linked or aminated proteins, respectively. Involved in many biological processes, such as bone development, angiogenesis, wound healing, cellular differentiation, chromatin modification and apoptosis. Acts as a protein-glutamine gamma-glutamyltransferase by mediating the cross-linking of proteins, such as ACO2, HSPB6, FN1, HMGB1, RAP1GDS1, SLC25A4/ANT1, SPP1 and WDR54. Under physiological conditions, the protein cross-linking activity is inhibited by GTP; inhibition is relieved by Ca(2+) in response to various stresses. When secreted, catalyzes cross-linking of proteins of the extracellular matrix, such as FN1 and SPP1 resulting in the formation of scaffolds. Plays a key role during apoptosis, both by (1) promoting the cross-linking of cytoskeletal proteins resulting in condensation of the cytoplasm, and by (2) mediating cross-linking proteins of the extracellular matrix, resulting in the irreversible formation of scaffolds that stabilize the integrity of the dying cells before their clearance by phagocytosis, thereby preventing the leakage of harmful intracellular components. In addition to protein cross-linking, can use different monoamine substrates to catalyze a vast array of protein post-translational modifications: mediates aminylation of serotonin, dopamine, noradrenaline or histamine into glutamine residues of target proteins to generate protein serotonylation, dopaminylation, noradrenalinylation or histaminylation, respectively. Mediates protein serotonylation of small GTPases during activation and aggregation of platelets, leading to constitutive activation of these GTPases. Plays a key role in chromatin organization by mediating serotonylation and dopaminylation of histone H3. Catalyzes serotonylation of 'Gln-5' of histone H3 (H3Q5ser) during serotonergic neuron differentiation, thereby facilitating transcription. Acts as a mediator of neurotransmission-independent role of nuclear dopamine in ventral tegmental area (VTA) neurons: catalyzes dopaminylation of 'Gln-5' of histone H3 (H3Q5dop), thereby regulating relapse-related transcriptional plasticity in the reward system. Regulates vein remodeling by mediating serotonylation and subsequent inactivation of ATP2A2/SERCA2. Also acts as a protein deamidase by mediating the side chain deamidation of specific glutamine residues of proteins to glutamate. Catalyzes specific deamidation of protein gliadin, a component of wheat gluten in the diet. May also act as an isopeptidase cleaving the previously formed cross-links. Also able to participate in signaling pathways independently of its acyltransferase activity: acts as a signal transducer in alpha-1 adrenergic receptor-mediated stimulation of phospholipase C-delta (PLCD) activity and is required for coupling alpha-1 adrenergic agonists to the stimulation of phosphoinositide lipid metabolism. The chain is Protein-glutamine gamma-glutamyltransferase 2 from Cavia cutleri (Guinea pig).